Here is a 300-residue protein sequence, read N- to C-terminus: Type II methyltransferase M.Cfr9I (300 aa).

Residues Arg109 to Thr129 form a disordered region.

This sequence belongs to the N(4)/N(6)-methyltransferase family. N(4) subfamily.

It carries out the reaction a 2'-deoxycytidine in DNA + S-adenosyl-L-methionine = an N(4)-methyl-2'-deoxycytidine in DNA + S-adenosyl-L-homocysteine + H(+). Functionally, a beta subtype methylase, recognizes the double-stranded sequence 5'-CCCGGG-3', methylates C-2 on both strands, and protects the DNA from cleavage by the Cfr9I endonuclease. The protein is Type II methyltransferase M.Cfr9I of Citrobacter freundii.